Here is a 173-residue protein sequence, read N- to C-terminus: Tumor necrosis factor ligand superfamily member 18 (173 aa).

The Cytoplasmic portion of the chain corresponds to 1 to 20 (MEEMPLRESSPQRAERCKKS). A helical; Signal-anchor for type II membrane protein transmembrane segment spans residues 21 to 41 (WLLCIVALLLMLLCSLGTLIY). The THD domain maps to 40–166 (IYTSLKPTAI…TNTYWGIILM (127 aa)). Residues 42 to 173 (TSLKPTAIES…ILMPDLPFIS (132 aa)) are Extracellular-facing. Cys52 and Cys72 are oxidised to a cystine. An N-linked (GlcNAc...) asparagine glycan is attached at Asn74.

Belongs to the tumor necrosis factor family. In terms of assembly, homotrimer. Homodimer. Post-translationally, N-glycosylated. Detected in immature and mature dendritic cells and in macrophages (at protein level). Detected in spleen, lung, heart, thymus, monocytes, macrophages, B-cells and dendritic cells.

The protein localises to the cell membrane. Cytokine that binds to TNFRSF18/AITR/GITR. Regulates T-cell responses. Can function as costimulator and lower the threshold for T-cell activation and T-cell proliferation. Important for interactions between activated T-lymphocytes and endothelial cells. Mediates activation of NF-kappa-B. Triggers increased phosphorylation of STAT1 and up-regulates expression of VCAM1 and ICAM1. Promotes leukocyte adhesion to endothelial cells. Regulates migration of monocytes from the splenic reservoir to sites of inflammation. The chain is Tumor necrosis factor ligand superfamily member 18 (Tnfsf18) from Mus musculus (Mouse).